A 732-amino-acid polypeptide reads, in one-letter code: Catalase-peroxidase (732 aa).

The signal sequence occupies residues 1-45; the sequence is MDTKVDNAGKCPVVHTHTAHGGRSNRDWWPNQLNLRILHQNSSLS. Positions 97–220 form a cross-link, tryptophyl-tyrosyl-methioninium (Trp-Tyr) (with M-246); it reads WHSAGTYRTG…LSAVQMGLIY (124 aa). Catalysis depends on His98, which acts as the Proton acceptor. The segment at residues 220-246 is a cross-link (tryptophyl-tyrosyl-methioninium (Tyr-Met) (with W-97)); it reads YVNPEGPNGNPDPLAAARDIRETFARM. Residue His261 coordinates heme b.

This sequence belongs to the peroxidase family. Peroxidase/catalase subfamily. Homodimer or homotetramer. Requires heme b as cofactor. Post-translationally, formation of the three residue Trp-Tyr-Met cross-link is important for the catalase, but not the peroxidase activity of the enzyme.

It catalyses the reaction H2O2 + AH2 = A + 2 H2O. The enzyme catalyses 2 H2O2 = O2 + 2 H2O. Bifunctional enzyme with both catalase and broad-spectrum peroxidase activity. In Rhizobium rhizogenes (strain K84 / ATCC BAA-868) (Agrobacterium radiobacter), this protein is Catalase-peroxidase.